A 470-amino-acid polypeptide reads, in one-letter code: Neuronal acetylcholine receptor subunit beta-4 (470 aa).

The N-terminal stretch at 1–3 (STA) is a signal peptide. Residues 4–216 (ADAEEKLMNH…IIKRKPLFYT (213 aa)) lie on the Extracellular side of the membrane. 3 N-linked (GlcNAc...) asparagine glycosylation sites follow: Asn-29, Asn-118, and Asn-146. Cys-133 and Cys-147 are joined by a disulfide. A helical membrane pass occupies residues 217–237 (INLIIPCVLITSLAILVFYLP). Residues 238–245 (SDCGEKMT) are Cytoplasmic-facing. Na(+) is bound at residue Glu-242. Residues 246 to 266 (LCISVLLALTVFLLLISKIVP) traverse the membrane as a helical segment. The Extracellular segment spans residues 267-278 (PTSLDVPLIGKY). A helical transmembrane segment spans residues 279 to 299 (LMFTMVLVTFSIVTSVCVLNV). Residues 300–438 (HHRSPSTHTM…WKYVAMVVDR (139 aa)) are Cytoplasmic-facing. The helical transmembrane segment at 439-459 (LFLWIFVLVCVLGTVGLFLQP) threads the bilayer. Over 460 to 470 (LFQNHIAATNP) the chain is Extracellular.

Belongs to the ligand-gated ion channel (TC 1.A.9) family. Acetylcholine receptor (TC 1.A.9.1) subfamily. Beta-4/CHRNB4 sub-subfamily. As to quaternary structure, neuronal AChR is composed of two different types of subunits: alpha and beta. CHRNB4/Beta-4 subunit can be combined to CHRNA2/alpha-2, CHRNA3/alpha-3 or CHRNA4/alpha-4, CHRNA5/alpha-5 and CHRNB3/beta-3 to give rise to functional receptors.

It localises to the synaptic cell membrane. It is found in the cell membrane. It carries out the reaction Ca(2+)(in) = Ca(2+)(out). The enzyme catalyses K(+)(in) = K(+)(out). It catalyses the reaction Na(+)(in) = Na(+)(out). Activated by a myriad of ligands such as acetylcholine, cytisine, nicotine, choline and epibatidine. The heteropentamer CHRNA3:CHRNB4 activity is blocked by the alpha-conotoxin ImI and AuIB. Its function is as follows. Component of neuronal acetylcholine receptors (nAChRs) that function as pentameric, ligand-gated cation channels with high calcium permeability among other activities. nAChRs are excitatory neurotrasnmitter receptors formed by a collection of nAChR subunits known to mediate synaptic transmission in the nervous system and the neuromuscular junction. Each nAchR subunit confers differential attributes to channel properties, including activation, deactivation and desensitization kinetics, pH sensitivity, cation permeability, and binding to allosteric modulators. CHRNB4 forms heteropentameric neuronal acetylcholine receptors with CHRNA2, CHRNA3 and CHRNA4, as well as CHRNA5 and CHRNB3 as accesory subunits. CHRNA3:CHRNB4 being predominant in neurons of the autonomic ganglia, it is known as ganglionic nicotinic receptor. CHRNA3:CHRNB4 or CHRNA3:CHRNA5:CHRNB4 play also an important role in the habenulo-interpeduncular tract, modulating the mesolimbic dopamine system and affecting reward circuits and addiction. Hypothalamic CHRNA3:CHRNB4 nAChR activation by nicotine leads to activation of POMC neurons and a decrease in food intake. The chain is Neuronal acetylcholine receptor subunit beta-4 (CHRNB4) from Gallus gallus (Chicken).